Reading from the N-terminus, the 240-residue chain is tRNA pseudouridine synthase B (240 aa).

Asp-54 serves as the catalytic Nucleophile.

The protein belongs to the pseudouridine synthase TruB family. Type 1 subfamily.

The catalysed reaction is uridine(55) in tRNA = pseudouridine(55) in tRNA. In terms of biological role, responsible for synthesis of pseudouridine from uracil-55 in the psi GC loop of transfer RNAs. In Chlorobaculum tepidum (strain ATCC 49652 / DSM 12025 / NBRC 103806 / TLS) (Chlorobium tepidum), this protein is tRNA pseudouridine synthase B.